We begin with the raw amino-acid sequence, 3033 residues long: Genome polyprotein (3033 aa).

At Ser2 the chain carries N-acetylserine; by host. Residues 2 to 23 (STNPKPQRKTKRNTNRRPQDVK) form an interaction with STAT1 region. An interaction with EIF2AK2/PKR region spans residues 2 to 58 (STNPKPQRKTKRNTNRRPQDVKFPGGGQIVGGVYLLPRRGPRLGVRATRKTSERSQP). An interaction with DDX3X region spans residues 2-59 (STNPKPQRKTKRNTNRRPQDVKFPGGGQIVGGVYLLPRRGPRLGVRATRKTSERSQPR). The interval 2 to 75 (STNPKPQRKT…PKDRRSTGKS (74 aa)) is disordered. Over 2–168 (STNPKPQRKT…EDGVNFATGN (167 aa)) the chain is Cytoplasmic. 2 consecutive short sequence motifs (nuclear localization signal) follow at residues 5–13 (PKPQRKTKR) and 38–43 (PRRGPR). Basic residues predominate over residues 7-16 (PQRKTKRNTN). Low complexity predominate over residues 32–47 (GGVYLLPRRGPRLGVR). Ser53 carries the phosphoserine; by host modification. Short sequence motifs (nuclear localization signal) lie at residues 58–64 (PRGRRQP) and 66–71 (PKDRRS). Phosphoserine; by host is present on Ser99. The important for endoplasmic reticulum and mitochondrial localization stretch occupies residues 112–152 (PRHRSRNVGKVIDTLTCGFADLMGYIPVVGAPLGGVARALA). A Phosphoserine; by host PKA modification is found at Ser116. Residues 122–173 (VIDTLTCGFADLMGYIPVVGAPLGGVARALAHGVRVLEDGVNFATGNLPGCS) are interaction with APOA2. The important for lipid droplets localization stretch occupies residues 164–167 (FATG). A helical membrane pass occupies residues 169 to 189 (LPGCSFSIFLLALLSCITTPV). A propeptide spans 178-191 (LLALLSCITTPVSA) (ER anchor for the core protein, removed in mature form by host signal peptidase). At 190–358 (SAAEVKNIST…GGAHWGVMFG (169 aa)) the chain is on the lumenal side. N-linked (GlcNAc...) asparagine; by host glycans are attached at residues Asn196, Asn209, and Asn234. Residues 265–296 (VVMSATLCSALYVGDLCGGVMLAAQMFIVSPQ) form an important for fusion region. N-linked (GlcNAc...) asparagine; by host glycosylation is present at Asn305. A helical membrane pass occupies residues 359–379 (LAYFSMQGAWAKVVVILLLAA). Residues 380-729 (GVDAQTHTVG…WEWVVLLFLL (350 aa)) are Lumenal-facing. An HVR1 region spans residues 385–411 (THTVGGSTAHNARTLTGMFSLGARQKI). N-linked (GlcNAc...) (high mannose) asparagine; by host glycosylation is found at Asn417, Asn423, Asn430, and Asn448. Cystine bridges form between Cys429-Cys554, Cys452-Cys459, Cys488-Cys496, and Cys505-Cys510. The N-linked (GlcNAc...) (high mannose) asparagine; by host glycan is linked to Asn477. The interval 484–496 (MRPYCWHYPPRQC) is CD81-binding 1. The CD81-binding 2 stretch occupies residues 524–555 (LGAPTYTWGENETDVFLLNSTRPPQGSWFGCT). N-linked (GlcNAc...) (high mannose) asparagine; by host glycosylation is found at Asn534, Asn542, and Asn558. A disulfide bond links Cys566 and Cys571. The N-linked (GlcNAc...) (high mannose) asparagine; by host glycan is linked to Asn578. Disulfide bonds link Cys585/Cys589, Cys601/Cys624, and Cys611/Cys648. N-linked (GlcNAc...) (high mannose) asparagine; by host glycans are attached at residues Asn627 and Asn649. An intrachain disulfide couples Cys656 to Cys681. Positions 664–675 (SQLSPLLHSTTE) are EIF2AK2/eIF2-alpha phosphorylation homology domain (PePHD). A helical membrane pass occupies residues 730 to 750 (LADARVCACLWMLILLGQAEA). At 751 to 761 (ALEKLVVLHAA) the chain is on the lumenal side. A helical transmembrane segment spans residues 762 to 782 (SAASCNGFLYFVIFFVAAWYI). Residues 783 to 786 (KGRV) are Cytoplasmic-facing. The chain crosses the membrane as a helical span at residues 787 to 807 (VPLATYSLTGLWSFGLLLLAL). Topologically, residues 808 to 817 (PQQAYAYDAS) are lumenal. A helical membrane pass occupies residues 818–838 (VHGQIGAALLVLITLFTLTPG). Residues 839 to 885 (YKTLLSRFLWWLCYLLTLAEAMVQEWAPPMQVRGGRDGIIWAVAIFC) are Cytoplasmic-facing. A helical membrane pass occupies residues 886-906 (PGVVFDITKWLLAVLGPAYLL). Residues 907 to 932 (KGALTRVPYFVRAHALLRMCTMVRHL) are Lumenal-facing. Residues 907 to 1030 (KGALTRVPYF…GYTSKGWSLL (124 aa)) enclose the Peptidase C18 domain. Residues 908 to 1210 (GALTRVPYFV…PVETLDIVTR (303 aa)) form a protease NS2-3 region. Cys926 carries S-palmitoyl cysteine; by host lipidation. A helical transmembrane segment spans residues 933-953 (AGGRYVQMVLLALGRWTGTYI). Positions 933-953 (AGGRYVQMVLLALGRWTGTYI) are interaction with host SCPS1. Over 954–1661 (YDHLTPMSDW…CMQADLEVMT (708 aa)) the chain is Cytoplasmic. Catalysis depends on for protease NS2 activity; shared with dimeric partner residues His956, Glu976, and Cys997. The 182-residue stretch at 1031–1212 (APITAYAQQT…ETLDIVTRSP (182 aa)) folds into the Peptidase S29 domain. Catalysis depends on charge relay system; for serine protease NS3 activity residues His1087 and Asp1111. Zn(2+)-binding residues include Cys1127 and Cys1129. The active-site Charge relay system; for serine protease NS3 activity is the Ser1169. Residues Cys1175 and His1179 each coordinate Zn(2+). Residues 1221 to 1373 (PAVPQTYQVG…PNIEEVALGQ (153 aa)) enclose the Helicase ATP-binding domain. ATP is bound at residue 1234 to 1241 (APTGSGKS). 2 residues coordinate Mg(2+): Ser1241 and Glu1321. The short motif at 1320–1323 (DECH) is the DECH box element. The tract at residues 1490–1501 (QRRGRTGRGRLG) is RNA-binding. Residues 1662 to 1682 (STWVLAGGVLAAVAAYCLATG) form a helical membrane-spanning segment. Positions 1683 to 1694 (CVCIIGRLHVNQ) are NS3-binding. Residues 1683–1809 (CVCIIGRLHV…ALTSPLSTST (127 aa)) are Cytoplasmic-facing. A helical transmembrane segment spans residues 1810–1830 (TILLNILGGWLASQIAPPAGA). The Lumenal portion of the chain corresponds to 1831–1832 (TG). A helical membrane pass occupies residues 1833–1853 (FVVSGLVGAAVGSIGLGKVLV). The segment at 1837 to 1865 (GLVGAAVGSIGLGKVLVDILAGYGAGISG) is glycine zipper. Residue Asp1854 is a topological domain, cytoplasmic. A helical transmembrane segment spans residues 1855–1875 (ILAGYGAGISGALVAFKIMSG). The Lumenal segment spans residues 1876–1885 (EKPSMEDVVN). Residues 1886–1906 (LLPGILSPGALVVGVICAAIL) traverse the membrane as a helical segment. Topologically, residues 1907–1976 (RRHVGPGEGA…WITEDCPIPC (70 aa)) are cytoplasmic. Cys1972 carries the S-palmitoyl cysteine; by host lipid modification. Cys1976 is lipidated: S-palmitoyl cysteine; by host; partial. An intramembrane segment occupies 1977–2007 (SGSWLRDVWDWVCTILTDFKNWLTSKLFPKM). The membrane-binding stretch occupies residues 1982–2002 (RDVWDWVCTILTDFKNWLTSK). Residues 2008–3012 (PGLPFISCQK…YHSVSRARPR (1005 aa)) are Cytoplasmic-facing. The tract at residues 2009 to 2225 (GLPFISCQKG…RATCTTHGKA (217 aa)) is RNA-binding. The Zn(2+) site is built by Cys2015, Cys2033, Cys2035, and Cys2056. At Tyr2069 the chain carries Phosphotyrosine; by host. The tract at residues 2124–2212 (EFFSWVDGVQ…ASSSASQLSA (89 aa)) is FKBP8-binding. The transcriptional activation stretch occupies residues 2124 to 2332 (EFFSWVDGVQ…PTPPPRRRRT (209 aa)). The tract at residues 2139–2143 (PIPKP) is interaction with non-structural protein 4A. Disordered stretches follow at residues 2193-2214 (RLAR…SAPS) and 2309-2335 (ATVA…TVGL). The residue at position 2198 (Ser2198) is a Phosphoserine; by host; in p56. Positions 2198 to 2214 (SPPSEASSSASQLSAPS) are enriched in low complexity. The residue at position 2201 (Ser2201) is a Phosphoserine; by host; in p58. Position 2205 is a phosphoserine; by host; in p56 and p58, regulates intracellular NS5A distribution (Ser2205). Residues Ser2208, Ser2211, and Ser2214 each carry the phosphoserine; by host; in p58 modification. An ISDR region spans residues 2210–2249 (LSAPSLRATCTTHGKAYDVDMVDANLFMGGDVTRIESESK). The segment at 2214-2275 (SLRATCTTHG…LEPSIPSEYM (62 aa)) is interaction with EIF2AK2/PKR. Residues 2253-2310 (LDSLDPMVEERSDLEPSIPSEYMLPKKRFPPALPAWARPDYNPPLVESWKRPDYQPAT) are NS4B-binding. The segment covering 2316 to 2326 (LPPPKKTPTPP) has biased composition (pro residues). Positions 2322–2325 (TPTP) match the SH3-binding motif. Phosphothreonine; by host is present on Thr2324. The Nuclear localization signal signature appears at 2326-2334 (PPRRRRTVG). The interval 2336–2447 (SESSIADALQ…SVVCCSMSYS (112 aa)) is interaction with host IFI27. Residue Lys2350 forms a Glycyl lysine isopeptide (Lys-Gly) (interchain with G-Cter in ubiquitin) linkage. Residues 2351 to 2431 (SFGQPPPSGD…PGSGSGSWST (81 aa)) form a disordered region. The tract at residues 2358–2381 (SGDSGLSTGADAADSGSRTPPDEL) is V3. The segment covering 2398–2408 (EPGDPDLEPEQ) has biased composition (acidic residues). Low complexity predominate over residues 2417 to 2431 (GGVVTPGSGSGSWST). One can recognise a RdRp catalytic domain in the interval 2656 to 2774 (PMGFSYDTRC…ISESQGTEED (119 aa)). 3 residues coordinate Mg(2+): Asp2662, Asp2760, and Asp2761. A helical transmembrane segment spans residues 3013–3033 (LLLLGLLLLFVGVGLFLLPAR).

This sequence belongs to the hepacivirus polyprotein family. Homooligomer. Interacts with E1 (via C-terminus). Interacts with the non-structural protein 5A. Interacts (via N-terminus) with host STAT1 (via SH2 domain); this interaction results in decreased STAT1 phosphorylation and ubiquitin-mediated proteasome-dependent STAT1 degradation, leading to decreased IFN-stimulated gene transcription. Interacts with host STAT3; this interaction constitutively activates STAT3. Interacts with host LTBR receptor. Interacts with host TNFRSF1A receptor and possibly induces apoptosis. Interacts with host HNRPK. Interacts with host YWHAE. Interacts with host UBE3A/E6AP. Interacts with host DDX3X. Interacts with host APOA2. Interacts with host RXRA protein. Interacts with host SP110 isoform 3/Sp110b; this interaction sequesters the transcriptional corepressor SP110 away from the nucleus. Interacts with host CREB3 nuclear transcription protein; this interaction triggers cell transformation. Interacts with host ACY3. Interacts with host C1QR1. Interacts with host RBM24; this interaction, which enhances the interaction of the mature core protein with 5'-UTR, may inhibit viral translation and favor replication. Interacts with host EIF2AK2/PKR; this interaction induces the autophosphorylation of EIF2AK2. Part of the viral assembly initiation complex composed of NS2, E1, E2, NS3, NS4A, NS5A and the mature core protein. As to quaternary structure, forms a heterodimer with envelope glycoprotein E2. Interacts with mature core protein. Interacts with protease NS2. The heterodimer E1/E2 interacts with host CLDN1; this interaction plays a role in viral entry into host cell. Interacts with host SPSB2 (via C-terminus). Part of the viral assembly initiation complex composed of NS2, E1, E2, NS3, NS4A, NS5A and the mature core protein. Interacts with host NEURL3; this interaction prevents E1 binding to glycoprotein E2. In terms of assembly, forms a heterodimer with envelope glycoprotein E1. Interacts with host CD81 and SCARB1 receptors; this interaction may play a role in viral entry into host cell. Interacts with host EIF2AK2/PKR; this interaction inhibits EIF2AK2 and probably allows the virus to evade the innate immune response. Interacts with host CD209/DC-SIGN and CLEC4M/DC-SIGNR. Interact with host SPCS1; this interaction is essential for viral particle assembly. Interacts with protease NS2. The heterodimer E1/E2 interacts with host CLDN1; this interaction plays a role in viral entry into host cell. Part of the viral assembly initiation complex composed of NS2, E1, E2, NS3, NS4A, NS5A and the mature core protein. Interacts with host SLC3A2/4F2hc; the interaction may facilitate viral entry into host cell. Interacts with human PLSCR1. Homohexamer. Homoheptamer. Interacts with protease NS2. As to quaternary structure, homodimer. Interacts with host SPCS1; this interaction is essential for viral particle assembly. Interacts with envelope glycoprotein E1. Interacts with envelope glycoprotein E2. Interacts with viroporin p7. Interacts with serine protease/helicase NS3. Part of the replication complex composed of NS2, NS3, NS4A, NS4B, NS5A and the RNA-directed RNA polymerase embedded in an ER-derived membranous web. Part of the viral assembly initiation complex composed of NS2, E1, E2, NS3, NS4A, NS5A and the mature core protein. In terms of assembly, interacts with protease NS2. Interacts with non-structural protein 4A; this interaction stabilizes the folding of NS3 serine protease. NS3-NS4A interaction is essential for NS3 activation and allows membrane anchorage of the latter. NS3/NS4A complex also prevents phosphorylation of host IRF3, thus preventing the establishment of dsRNA induced antiviral state. Interacts with host MAVS; this interaction leads to the cleavage and inhibition of host MAVS. Interacts with host TICAM1; this interaction leads to the cleavage and inhibition of host TICAM1. Interacts with host TANK-binding kinase/TBK1; this interaction results in the inhibition of the association between TBK1 and IRF3, which leads to the inhibition of IRF3 activation. Interacts with host RBM24. Part of the replication complex composed of NS2, NS3, NS4A, NS4B, NS5A and the RNA-directed RNA polymerase embedded in an ER-derived membranous web. Part of the viral assembly initiation complex composed of NS2, E1, E2, NS3, NS4A, NS5A and the mature core protein. Interacts with NS3 serine protease; this interaction stabilizes the folding of NS3 serine protease. NS3-NS4A interaction is essential for NS3 activation and allows membrane anchorage of the latter. Interacts with non-structural protein 5A (via N-terminus). Part of the replication complex composed of NS2, NS3, NS4A, NS4B, NS5A and the RNA-directed RNA polymerase embedded in an ER-derived membranous web. Part of the viral assembly initiation complex composed of NS2, E1, E2, NS3, NS4A, NS5A and the mature core protein. As to quaternary structure, homomultimer. Interacts with non-structural protein NS5A. Interacts with host PLA2G4C; this interaction likely initiates the recruitment of replication complexes to lipid droplets. Interacts with host STING; this interaction disrupts the interaction between STING and TBK1 thereby suppressing the interferon signaling. Part of the replication complex composed of NS2, NS3, NS4A, NS4B, NS5A and the RNA-directed RNA polymerase embedded in an ER-derived membranous web. In terms of assembly, monomer. Homodimer; dimerization is required for RNA-binding. Interacts with the mature core protein. Interacts (via N-terminus) with non-structural protein 4A. Interacts with non-structural protein 4B. Interacts (via region D2) with RNA-directed RNA polymerase. Part of the viral assembly initiation complex composed of NS2, E1, E2, NS3, NS4A, NS5A and the mature core protein. Part of the replication complex composed of NS2, NS3, NS4A, NS4B, NS5A and the RNA-directed RNA polymerase embedded in an ER-derived membranous web. Interacts with host GRB2. Interacts with host BIN1. Interacts with host PIK3R1. Interacts with host SRCAP. Interacts with host FKBP8. Interacts (via C-terminus) with host VAPB (via MSP domain). Interacts with host EIF2AK2/PKR; this interaction leads to disruption of EIF2AK2 dimerization by NS5A and probably allows the virus to evade the innate immune response. Interacts (via N-terminus) with host PACSIN2 (via N-terminus); this interaction attenuates protein kinase C alpha-mediated phosphorylation of PACSIN2 by disrupting the interaction between PACSIN2 and PRKCA. Interacts (via N-terminus) with host SRC kinase (via SH2 domain). Interacts with most Src-family kinases. Interacts with host IFI27 and SKP2; promotes the ubiquitin-mediated proteasomal degradation of NS5A. Interacts with host GPS2. Interacts with host TNFRSF21; this interaction allows the modulation by the virus of JNK, p38 MAPK, STAT3, and Akt signaling pathways in a DR6-dependent manner. Interacts (via N-terminus) with host CIDEB (via N-terminus); this interaction seems to regulate the association of HCV particles with APOE. Interacts with host CHKA/Choline Kinase-alpha; CHKA bridges host PI4KA and NS5A and potentiates NS5A-stimulated PI4KA activity, which then facilitates the targeting of the ternary complex to the ER for viral replication. Interacts with host SPSB2 (via C-terminus); this interaction targets NS5A for ubiquitination and degradation. Interacts with host RAB18; this interaction may promote the association of NS5A and other replicase components with lipid droplets. Interacts (via region D2) with host PPIA/CYPA; the interaction stimulates RNA-binding ability of NS5A and is dependent on the peptidyl-prolyl cis-trans isomerase activity of PPIA/CYPA. Interacts with host TRIM14; this interaction induces the degradation of NS5A. Homooligomer. Interacts with non-structural protein 5A. Interacts with host VAPB. Interacts with host PRK2/PKN2. Interacts with host HNRNPA1 and SEPT6; these interactions facilitate viral replication. Part of the replication complex composed of NS2, NS3, NS4A, NS4B, NS5A and the RNA-directed RNA polymerase. Zn(2+) is required as a cofactor. The cofactor is Mg(2+). Post-translationally, specific enzymatic cleavages in vivo yield mature proteins. The structural proteins, core, E1, E2 and p7 are produced by proteolytic processing by host signal peptidases. The core protein precursor is synthesized as a 23 kDa, which is retained in the ER membrane through the hydrophobic signal peptide. Cleavage by the signal peptidase releases the 21 kDa mature core protein. The cleavage of the core protein precursor occurs between aminoacids 176 and 188 but the exact cleavage site is not known. Some degraded forms of the core protein appear as well during the course of infection. The other proteins (p7, NS2, NS3, NS4A, NS4B, NS5A and NS5B) are cleaved by the viral proteases. Autoprocessing between NS2 and NS3 is mediated by the NS2 cysteine protease catalytic domain and regulated by the NS3 N-terminal domain. Phosphorylated by host PKC and PKA. In terms of processing, ubiquitinated; mediated by UBE3A and leading to core protein subsequent proteasomal degradation. Post-translationally, highly N-glycosylated. Palmitoylation is required for NS2/3 autoprocessing and E2 recruitment to membranes. In terms of processing, palmitoylated. This modification may play a role in its polymerization or in protein-protein interactions. Post-translationally, phosphorylated on serines in a basal form termed p56. p58 is a hyperphosphorylated form of p56. p56 and p58 coexist in the cell in roughly equivalent amounts. Hyperphosphorylation is dependent on the presence of NS4A. Host CSNK1A1/CKI-alpha or RPS6KB1 kinases may be responsible for NS5A phosphorylation. Tyrosine phosphorylation is essential for the interaction with host SRC. In terms of processing, the N-terminus is phosphorylated by host PRK2/PKN2.

The protein localises to the host endoplasmic reticulum membrane. It is found in the host mitochondrion membrane. It localises to the virion. The protein resides in the host cytoplasm. Its subcellular location is the host nucleus. The protein localises to the host lipid droplet. It is found in the virion membrane. It localises to the host mitochondrion. The protein resides in the host cell membrane. Its subcellular location is the host perinuclear region. The catalysed reaction is Hydrolysis of four peptide bonds in the viral precursor polyprotein, commonly with Asp or Glu in the P6 position, Cys or Thr in P1 and Ser or Ala in P1'.. It catalyses the reaction a ribonucleoside 5'-triphosphate + H2O = a ribonucleoside 5'-diphosphate + phosphate + H(+). The enzyme catalyses ATP + H2O = ADP + phosphate + H(+). It carries out the reaction RNA(n) + a ribonucleoside 5'-triphosphate = RNA(n+1) + diphosphate. Inhibited by the antiviral drug hexamethylene amiloride. Inhibition by amantadine appears to be genotype-dependent. Also inhibited by long-alkyl-chain iminosugar derivatives. With respect to regulation, activity is up-regulated by PRK2/PKN2-mediated phosphorylation. In terms of biological role, packages viral RNA to form a viral nucleocapsid, and promotes virion budding. Participates in the viral particle production as a result of its interaction with the non-structural protein 5A. Binds RNA and may function as a RNA chaperone to induce the RNA structural rearrangements taking place during virus replication. Modulates viral translation initiation by interacting with viral IRES and 40S ribosomal subunit. Affects various cell signaling pathways, host immunity and lipid metabolism. Prevents the establishment of cellular antiviral state by blocking the interferon-alpha/beta (IFN-alpha/beta) and IFN-gamma signaling pathways and by blocking the formation of phosphorylated STAT1 and promoting ubiquitin-mediated proteasome-dependent degradation of STAT1. Activates STAT3 leading to cellular transformation. Regulates the activity of cellular genes, including c-myc and c-fos. May repress the promoter of p53, and sequester CREB3 and SP110 isoform 3/Sp110b in the cytoplasm. Represses cell cycle negative regulating factor CDKN1A, thereby interrupting an important check point of normal cell cycle regulation. Targets transcription factors involved in the regulation of inflammatory responses and in the immune response: suppresses TNF-induced NF-kappa-B activation, and activates AP-1. Binds to dendritic cells (DCs) via C1QR1, resulting in down-regulation of T-lymphocytes proliferation. Alters lipid metabolism by interacting with hepatocellular proteins involved in lipid accumulation and storage. Induces up-regulation of FAS promoter activity, and thereby contributes to the increased triglyceride accumulation in hepatocytes (steatosis). Its function is as follows. Forms a heterodimer with envelope glycoprotein E2, which mediates virus attachment to the host cell, virion internalization through clathrin-dependent endocytosis and fusion with host membrane. Fusion with the host cell is most likely mediated by both E1 and E2, through conformational rearrangements of the heterodimer required for fusion rather than a classical class II fusion mechanism. E1/E2 heterodimer binds host apolipoproteins such as APOB and APOE thereby forming a lipo-viro-particle (LVP). APOE associated to the LVP allows the initial virus attachment to cell surface receptors such as the heparan sulfate proteoglycans (HSPGs), syndecan-1 (SDC1), syndecan-1 (SDC2), the low-density lipoprotein receptor (LDLR) and scavenger receptor class B type I (SCARB1). The cholesterol transfer activity of SCARB1 allows E2 exposure and binding of E2 to SCARB1 and the tetraspanin CD81. E1/E2 heterodimer binding on CD81 activates the epithelial growth factor receptor (EGFR) signaling pathway. Diffusion of the complex E1-E2-EGFR-SCARB1-CD81 to the cell lateral membrane allows further interaction with Claudin 1 (CLDN1) and occludin (OCLN) to finally trigger HCV entry. Forms a heterodimer with envelope glycoprotein E1, which mediates virus attachment to the host cell, virion internalization through clathrin-dependent endocytosis and fusion with host membrane. Fusion with the host cell is most likely mediated by both E1 and E2, through conformational rearrangements of the heterodimer required for fusion rather than a classical class II fusion mechanism. The interaction between envelope glycoprotein E2 and host apolipoprotein E/APOE allows the proper assembly, maturation and infectivity of the viral particles. This interaction is probably promoted via the up-regulation of cellular autophagy by the virus. E1/E2 heterodimer binds host apolipoproteins such as APOB and APOE thereby forming a lipo-viro-particle (LVP). APOE associated to the LVP allows the initial virus attachment to cell surface receptors such as the heparan sulfate proteoglycans (HSPGs), syndecan-1 (SDC1), syndecan-1 (SDC2), the low-density lipoprotein receptor (LDLR) and scavenger receptor class B type I (SCARB1). The cholesterol transfer activity of SCARB1 allows E2 exposure and binding of E2 to SCARB1 and the tetraspanin CD81. E1/E2 heterodimer binding on CD81 activates the epithelial growth factor receptor (EGFR) signaling pathway. Diffusion of the complex E1-E2-EGFR-SCARB1-CD81 to the cell lateral membrane allows further interaction with Claudin 1 (CLDN1) and occludin (OCLN) to finally trigger HCV entry. Inhibits host EIF2AK2/PKR activation, preventing the establishment of an antiviral state. Viral ligand for CD209/DC-SIGN and CLEC4M/DC-SIGNR, which are respectively found on dendritic cells (DCs), and on liver sinusoidal endothelial cells and macrophage-like cells of lymph node sinuses. These interactions allow the capture of circulating HCV particles by these cells and subsequent facilitated transmission to permissive cells such as hepatocytes and lymphocyte subpopulations. The interaction between E2 and host amino acid transporter complex formed by SLC3A2 and SLC7A5/LAT1 may facilitate viral entry into host cell. Functionally, ion channel protein that acts as a viroporin and plays an essential role in the assembly, envelopment and secretion of viral particles. Regulates the host cell secretory pathway, which induces the intracellular retention of viral glycoproteins and favors assembly of viral particles. Creates a pore in acidic organelles and releases Ca(2+) and H(+) in the cytoplasm of infected cells, leading to a productive viral infection. High levels of cytoplasmic Ca(2+) may trigger membrane trafficking and transport of viral ER-associated proteins to viroplasms, sites of viral genome replication. This ionic imbalance induces the assembly of the inflammasome complex, which triggers the maturation of pro-IL-1beta into IL-1beta through the action of caspase-1. Targets also host mitochondria and induces mitochondrial depolarization. In addition of its role as a viroporin, acts as a lipid raft adhesion factor. In terms of biological role, cysteine protease required for the proteolytic auto-cleavage between the non-structural proteins NS2 and NS3. The N-terminus of NS3 is required for the function of NS2 protease (active region NS2-3). Promotes the initiation of viral particle assembly by mediating the interaction between structural and non-structural proteins. Its function is as follows. Displays three enzymatic activities: serine protease with a chymotrypsin-like fold, NTPase and RNA helicase. NS3 serine protease, in association with NS4A, is responsible for the cleavages of NS3-NS4A, NS4A-NS4B, NS4B-NS5A and NS5A-NS5B. The NS3/NS4A complex prevents phosphorylation of host IRF3, thus preventing the establishment of dsRNA induced antiviral state. The NS3/NS4A complex induces host amino acid transporter component SLC3A2, thus contributing to HCV propagation. NS3 RNA helicase binds to RNA and unwinds both dsDNA and dsRNA in the 3' to 5' direction, and likely resolves RNA complicated stable secondary structures in the template strand. Binds a single ATP and catalyzes the unzipping of a single base pair of dsRNA. Inhibits host antiviral proteins TBK1 and IRF3 thereby preventing the establishment of an antiviral state. Cleaves host MAVS/CARDIF thereby preventing the establishment of an antiviral state. Cleaves host TICAM1/TRIF, thereby disrupting TLR3 signaling and preventing the establishment of an antiviral state. Induces a specific membrane alteration that serves as a scaffold for the virus replication complex. This membrane alteration gives rise to the so-called ER-derived membranous web that contains the replication complex. NS4B self-interaction contributes to its function in membranous web formation. Promotes host TRIF protein degradation in a CASP8-dependent manner thereby inhibiting host TLR3-mediated interferon signaling. Disrupts the interaction between STING and TBK1 contributing to the inhibition of interferon signaling. Functionally, phosphorylated protein that is indispensable for viral replication and assembly. Both hypo- and hyperphosphorylated states are required for the viral life cycle. The hyperphosphorylated form of NS5A is an inhibitor of viral replication. Involved in RNA-binding and especially in binding to the viral genome. Zinc is essential for RNA-binding. Participates in the viral particle production as a result of its interaction with the mature viral core protein. Its interaction with host VAPB may target the viral replication complex to vesicles. Down-regulates viral IRES translation initiation. Mediates interferon resistance, presumably by interacting with and inhibiting host EIF2AK2/PKR. Prevents BIN1-induced apoptosis. Acts as a transcriptional activator of some host genes important for viral replication when localized in the nucleus. Via the interaction with host PACSIN2, modulates lipid droplet formation in order to promote virion assembly. Modulates TNFRSF21/DR6 signaling pathway for viral propagation. In terms of biological role, RNA-dependent RNA polymerase that performs primer-template recognition and RNA synthesis during viral replication. Initiates RNA transcription/replication at a flavin adenine dinucleotide (FAD), resulting in a 5'- FAD cap on viral RNAs. In this way, recognition of viral 5' RNA by host pattern recognition receptors can be bypassed, thereby evading activation of antiviral pathways. In Homo sapiens (Human), this protein is Genome polyprotein.